The primary structure comprises 462 residues: BBSome complex member bbs-4 (462 aa).

Residues 1–46 are disordered; it reads MEASNQDEIIGTDVIPNEQDNPEEVVPEPTSLDVPPPPPERAPSAP. TPR repeat units lie at residues 89-122, 124-156, 199-232, 234-266, 268-300, 335-368, and 369-402; these read EAAFHVRGLIARNEGELEEAMECFHKAYELSGKN, RYFYETGRCNFLLGRHQIAVEQLTKASEVMKDN, ATLICFLGRLCEELGDTSGAIAAYKSSLKLQPDN, EVMNLLGLIYLRTGQVQEGFVQLGNCLAYDPAN, QAILTIGSIMQNHSDHDVALNKYRVAADVSDYN, YKISYNLGVLHDIMNLHCSALHYIKLCTELYPQN, and AKAVGAMAVILSHMNDDKNARLAYKKSIELKKNP.

It belongs to the BBS4 family. In terms of assembly, part of BBSome complex, that contains at least bbs-1, bbs-2, bbs-4, bbs-5, osm-12, bbs-8/ttc-8 and bbs-9. Interacts (via C-terminus) with bbs-5; the interaction is direct.

It is found in the cytoplasm. The protein resides in the cytoskeleton. It localises to the microtubule organizing center. Its subcellular location is the centrosome. The protein localises to the cell projection. It is found in the cilium membrane. Component of the BBSome complex. The BBSome complex is thought to function as a coat complex required for sorting of specific membrane proteins to the primary cilia. The BBSome complex is required for ciliogenesis but is dispensable for centriolar satellite function. Required for proper BBSome complex assembly and its ciliary localization. May be required for microtubule anchoring at the centrosome but not for microtubule nucleation. May be required for the dynein-mediated transport of pericentriolar proteins to the centrosome. Required, redundantly with bbs-5, for cilia biogenesis and both the assembly and movement of intraflagellar transport proteins along the ciliary axoneme. Plays a role in the removal of degraded mechanosensory receptors within the cilia. This Caenorhabditis elegans protein is BBSome complex member bbs-4.